Consider the following 146-residue polypeptide: VHLTGEEKTAVTNLWAKVNVDEVGGEALGRLLVVYPWTQRFFESFGDLSSPDAIMGNPKVKAHGKKVLNSFSEGLKNLDNLKGTFAKLSELHCDKLHVDPENFRLLGNVLVCVLAHHFGKEFTPQVQAAYQKVVAGVANALAHKYH.

Position 1 is an N-acetylvaline (Val-1). The Globin domain maps to 2 to 146 (HLTGEEKTAV…VANALAHKYH (145 aa)). Thr-12 is subject to Phosphothreonine. Ser-44 carries the post-translational modification Phosphoserine. Lys-59 bears the N6-acetyllysine mark. His-63 is a heme b binding site. Lys-82 bears the N6-acetyllysine mark. A heme b-binding site is contributed by His-92. Position 93 is an S-nitrosocysteine (Cys-93). Lys-144 carries the N6-acetyllysine modification.

The protein belongs to the globin family. Heterotetramer of two alpha chains and two beta chains. As to expression, red blood cells.

In terms of biological role, involved in oxygen transport from the lung to the various peripheral tissues. This is Hemoglobin subunit beta (HBB) from Nasua nasua (Ring-tailed coati).